The following is a 197-amino-acid chain: MSRYRGPRFKKIRRLGALPGLTNKSPRAIRDLRNQSRSEYRIRLEEKQKLRFHYGLTEKQLINYVQIARKAKGSTGKVLLQLLEMRLDNILFRLGMASTIPAARQLVNHRHVLVNGRLVDRPSYRCKPRDIIMPKNTTKSGVLVQNSLELFTGKELANHLNLFSTPYKGLVNKIVDTNWIGLKINELLVVEYYSRQA.

One can recognise an S4 RNA-binding domain in the interval 85–161; the sequence is MRLDNILFRL…TGKELANHLN (77 aa).

It belongs to the universal ribosomal protein uS4 family. Part of the 30S ribosomal subunit. Contacts protein S5. The interaction surface between S4 and S5 is involved in control of translational fidelity.

It localises to the plastid. One of the primary rRNA binding proteins, it binds directly to 16S rRNA where it nucleates assembly of the body of the 30S subunit. Functionally, with S5 and S12 plays an important role in translational accuracy. The polypeptide is Small ribosomal subunit protein uS4c (rps4) (Cuscuta obtusiflora (Peruvian dodder)).